A 385-amino-acid chain; its full sequence is Pepsin A (385 aa).

An N-terminal signal peptide occupies residues 1-15; that stretch reads MKWLLLLSLVVLSEC. Residues 16–59 constitute a propeptide, activation peptide; it reads LVKVPLVRKKSLRQNLIKNGKLKDFLKTHKHNPASKYFPEAAAL. In terms of domain architecture, Peptidase A1 spans 73–382; it reads YFGTIGIGTP…DRANNKVGLA (310 aa). Asp-91 is a catalytic residue. A disulfide bond links Cys-104 and Cys-109. At Ser-127 the chain carries Phosphoserine. Cys-265 and Cys-269 are joined by a disulfide. Asp-274 is a catalytic residue. An intrachain disulfide couples Cys-308 to Cys-341.

This sequence belongs to the peptidase A1 family. In terms of processing, minor amounts of the active enzyme occur with 'Ala-58' at the amino end.

It is found in the secreted. The enzyme catalyses Preferential cleavage: hydrophobic, preferably aromatic, residues in P1 and P1' positions. Cleaves 1-Phe-|-Val-2, 4-Gln-|-His-5, 13-Glu-|-Ala-14, 14-Ala-|-Leu-15, 15-Leu-|-Tyr-16, 16-Tyr-|-Leu-17, 23-Gly-|-Phe-24, 24-Phe-|-Phe-25 and 25-Phe-|-Tyr-26 bonds in the B chain of insulin.. In terms of biological role, shows particularly broad specificity; although bonds involving phenylalanine and leucine are preferred, many others are also cleaved to some extent. This Sus scrofa (Pig) protein is Pepsin A (PGA).